We begin with the raw amino-acid sequence, 223 residues long: Deoxyribose-phosphate aldolase (223 aa).

The active-site Proton donor/acceptor is aspartate 91. Lysine 153 functions as the Schiff-base intermediate with acetaldehyde in the catalytic mechanism. Lysine 183 serves as the catalytic Proton donor/acceptor.

It belongs to the DeoC/FbaB aldolase family. DeoC type 1 subfamily.

Its subcellular location is the cytoplasm. It carries out the reaction 2-deoxy-D-ribose 5-phosphate = D-glyceraldehyde 3-phosphate + acetaldehyde. It functions in the pathway carbohydrate degradation; 2-deoxy-D-ribose 1-phosphate degradation; D-glyceraldehyde 3-phosphate and acetaldehyde from 2-deoxy-alpha-D-ribose 1-phosphate: step 2/2. Its function is as follows. Catalyzes a reversible aldol reaction between acetaldehyde and D-glyceraldehyde 3-phosphate to generate 2-deoxy-D-ribose 5-phosphate. The chain is Deoxyribose-phosphate aldolase from Mycoplasmopsis synoviae (strain 53) (Mycoplasma synoviae).